The following is a 1460-amino-acid chain: Nucleoporin NUP159 (1460 aa).

An interaction with DBP5 region spans residues 1–500 (MSSLKDEVPT…SEQDATDPAS (500 aa)). One copy of the FG 1 repeat lies at 228-231 (AVFG). The PXFG 1 repeat unit spans residues 267 to 270 (PPFG). The tract at residues 401–435 (KSLSPTSEKIPIAGQEQEEKKKNNESSKALSENPF) is disordered. Ser-404 is modified (phosphoserine). An SXFGXPXFG 1 repeat occupies 462 to 470 (STFGAPSFG). A disordered region spans residues 483–504 (STSTGVASSEQDATDPASAKPV). The interval 497–701 (DPASAKPVFG…KPNTSTKPKT (205 aa)) is interactions with CRM1 and GLE1. One copy of the SXFGXPXFG 2; approximate repeat lies at 503–511 (PVFGKPAFG). An SXFGXPXFG 3; approximate repeat occupies 522-530 (YAFGKPSFG). A PXFG 2 repeat occupies 532–535 (PSFG). A disordered region spans residues 533–619 (SFGSGKSSVE…SAFGTASSNE (87 aa)). 4 stretches are compositionally biased toward polar residues: residues 536–546 (SGKSSVESPAS), 556–567 (GTPSFGSGNSSV), 582–593 (GTPSFGSGNSSA), and 607–619 (FGTS…SSNE). An SXFGXPXFG 4 repeat occupies 548 to 556 (SAFGKPSFG). The PXFG 3 repeat unit spans residues 558-561 (PSFG). An SXFGXPXFG 5 repeat occupies 574–582 (SAFGKPSFG). One copy of the PXFG 4 repeat lies at 584 to 587 (PSFG). The stretch at 600–608 (SAFGKPSFG) is one SXFGXPXFG 6 repeat. An SXFG 1 repeat occupies 610 to 613 (SAFG). Residues 624-632 (SIFGKAAFG) form an SXFGXPXFG 7; approximate repeat. The FG 2 repeat unit spans residues 642–645 (ELFG). The segment at 647–704 (NFTISKPTVDSPKEVDSTSPFPSSGDQSEDESKSDVDSSSTPFGTKPNTSTKPKTNAF) is disordered. Position 657 is a phosphoserine (Ser-657). Residues 683–704 (DSSSTPFGTKPNTSTKPKTNAF) are compositionally biased toward low complexity. An FG 3 repeat occupies 687-690 (TPFG). The FXFG 1 repeat unit spans residues 704–707 (FDFG). An SXFG 2 repeat occupies 709-712 (SSFG). Position 724 is a phosphoserine (Ser-724). 3 stretches are compositionally biased toward polar residues: residues 727-750 (TFKF…FSSF), 757-767 (NGSLSKGSTSE), and 778-800 (NGPN…STRL). Positions 727 to 824 (TFKFGTQASP…EAQKSPIGKL (98 aa)) are disordered. Residues 728-731 (FKFG) form an FXFG 2 repeat. A phosphoserine mark is found at Ser-735 and Ser-745. The residue at position 803 (Thr-803) is a Phosphothreonine. Acidic residues predominate over residues 804-814 (PSDEDGEVVEE). Phosphoserine occurs at positions 805 and 819. One copy of the PXFG 5 repeat lies at 842-845 (PVFG). The segment covering 861–889 (TNITKPSSTTPAFSFGNSTMNKSNTSTVS) has biased composition (polar residues). A disordered region spans residues 861–1092 (TNITKPSSTT…DINTDELPHG (232 aa)). The stretch at 873 to 876 (FSFG) is one FXFG 3 repeat. Ser-889 carries the phosphoserine modification. Residues 917–936 (AKEERTGESSKKDHNDDPKD) show a composition bias toward basic and acidic residues. Phosphoserine is present on Ser-940. Residues 942-958 (SEISVRTSESAFDTTAN) are compositionally biased toward polar residues. 4 stretches are compositionally biased toward basic and acidic residues: residues 960–1002 (EIPK…KNNE), 1017–1027 (ALKKDNEKENF), 1035–1061 (QFED…KESD), and 1068–1092 (SDRD…LPHG). Positions 1086–1175 (TDELPHGGEA…TCNFSVQTFE (90 aa)) are interaction with DYN2. Residues 1223-1460 (AEFTVLMENI…DFFKNLNMAK (238 aa)) form an interaction with NUP82 region. 2 coiled-coil regions span residues 1279–1320 (EQMQ…YLFL) and 1383–1418 (AKLA…GKKA).

Component of the nuclear pore complex (NPC). NPC constitutes the exclusive means of nucleocytoplasmic transport. NPCs allow the passive diffusion of ions and small molecules and the active, nuclear transport receptor-mediated bidirectional transport of macromolecules such as proteins, RNAs, ribonucleoparticles (RNPs), and ribosomal subunits across the nuclear envelope. Due to its 8-fold rotational symmetry, all subunits are present with 8 copies or multiples thereof. Part of the NUP82 subcomplex, interacts with NUP82 through its C-terminal coiled coil. This subcomplex is the base for interactions with NUP116 and GLE2, with NUP42 and GLE1 and with DYN2. Interacts directly with DYN2. Interacts through its FG repeats with karyopherins, such as heterodimeric mRNA transport factor MEX67/MTR2, CRM1 (XPO1), and PSE1 (GSP1-GDP dependent). Interaction with CRM1 (XPO1) is GSP1-GTP dependent and stimulated by RNA1. NUP159 also interacts with GLE1 and the ATP-dependent RNA helicase DBP5.

The protein localises to the nucleus. Its subcellular location is the nuclear pore complex. The protein resides in the nucleus membrane. In terms of biological role, functions as a component of the nuclear pore complex (NPC). NPC components, collectively referred to as nucleoporins (NUPs), can play the role of both NPC structural components and of docking or interaction partners for transiently associated nuclear transport factors. Active directional transport is assured by both, a Phe-Gly (FG) repeat affinity gradient for these transport factors across the NPC and a transport cofactor concentration gradient across the nuclear envelope (GSP1 and GSP2 GTPases associated predominantly with GTP in the nucleus, with GDP in the cytoplasm). NUP159 plays an important role in several nuclear export pathways including poly(A)+ RNA, pre-ribosome, and protein export. This Saccharomyces cerevisiae (strain ATCC 204508 / S288c) (Baker's yeast) protein is Nucleoporin NUP159 (NUP159).